Here is a 236-residue protein sequence, read N- to C-terminus: Opacity protein opA50 (236 aa).

Ala1 is a signal peptide.

The protein belongs to the opacity porin family.

The protein resides in the cell outer membrane. In terms of biological role, implicated in a number of adherence functions. OPA proteins are implicated in pathogenesis and are subject to phase variation. This Neisseria gonorrhoeae protein is Opacity protein opA50 (opaC).